The chain runs to 173 residues: Putative metal-dependent hydrolase BcerKBAB4_2443 (173 aa).

Residues His-65, His-156, and His-160 each contribute to the Zn(2+) site.

Belongs to the metal hydrolase YfiT family. In terms of assembly, homodimer. Requires Zn(2+) as cofactor.

The protein localises to the cytoplasm. Possible metal-dependent hydrolase. The polypeptide is Putative metal-dependent hydrolase BcerKBAB4_2443 (Bacillus mycoides (strain KBAB4) (Bacillus weihenstephanensis)).